A 566-amino-acid chain; its full sequence is E3 ubiquitin-protein ligase RNF220 (566 aa).

Residue Lys-277 forms a Glycyl lysine isopeptide (Lys-Gly) (interchain with G-Cter in SUMO2) linkage. Residues Lys-277–His-297 are disordered. A Phosphoserine modification is found at Ser-390. Positions Glu-485 to Lys-513 form a coiled coil. Positions Cys-514–Ser-522 are required for targeting to the cytoplasm. Residues Cys-514 to Asn-553 form an RING-type zinc finger.

Interacts with SIN3B. Interacts with CTNNB1 (via Armadillo repeats 2-8). Interacts with USP7 (via MATH domain). Post-translationally, auto-ubiquitinated; leads to proteasomal degradation.

The protein resides in the cytoplasm. Its subcellular location is the nucleus. The catalysed reaction is S-ubiquitinyl-[E2 ubiquitin-conjugating enzyme]-L-cysteine + [acceptor protein]-L-lysine = [E2 ubiquitin-conjugating enzyme]-L-cysteine + N(6)-ubiquitinyl-[acceptor protein]-L-lysine.. It participates in protein modification; protein ubiquitination. Its function is as follows. E3 ubiquitin-protein ligase that promotes the ubiquitination and proteasomal degradation of SIN3B. Independently of its E3 ligase activity, acts as a CTNNB1 stabilizer through USP7-mediated deubiquitination of CTNNB1 and promotes Wnt signaling. Plays a critical role in the regulation of nuclear lamina. In Macaca fascicularis (Crab-eating macaque), this protein is E3 ubiquitin-protein ligase RNF220 (RNF220).